Reading from the N-terminus, the 732-residue chain is 1,4-alpha-glucan branching enzyme GlgB (732 aa).

Catalysis depends on Asp415, which acts as the Nucleophile. Glu468 functions as the Proton donor in the catalytic mechanism.

It belongs to the glycosyl hydrolase 13 family. GlgB subfamily. In terms of assembly, monomer.

It catalyses the reaction Transfers a segment of a (1-&gt;4)-alpha-D-glucan chain to a primary hydroxy group in a similar glucan chain.. It participates in glycan biosynthesis; glycogen biosynthesis. Its function is as follows. Catalyzes the formation of the alpha-1,6-glucosidic linkages in glycogen by scission of a 1,4-alpha-linked oligosaccharide from growing alpha-1,4-glucan chains and the subsequent attachment of the oligosaccharide to the alpha-1,6 position. This chain is 1,4-alpha-glucan branching enzyme GlgB, found in Nitrosomonas eutropha (strain DSM 101675 / C91 / Nm57).